The sequence spans 206 residues: Sclerostin domain-containing protein 1 (206 aa).

The N-terminal stretch at 1–23 (MLPPAIHFYLLPLACILMKSCLA) is a signal peptide. Asn47 carries N-linked (GlcNAc...) asparagine glycosylation. Disulfide bonds link Cys75/Cys133, Cys89/Cys147, Cys100/Cys163, and Cys104/Cys165. Residues 75–170 (CRELRSTKYI…TACKCKRYTR (96 aa)) enclose the CTCK domain. An N-linked (GlcNAc...) asparagine glycan is attached at Asn173. The segment at 174–206 (ESSHNFESMSPAKPVQHHRERKRASKSSKHSMS) is disordered. Residues 188–206 (VQHHRERKRASKSSKHSMS) are compositionally biased toward basic residues.

This sequence belongs to the sclerostin family. Interacts with BMP2, BMP4, BMP6 and BMP7 with high affinity. Highly expressed in kidney and weakly in lung.

The protein resides in the secreted. Its function is as follows. May be involved in the onset of endometrial receptivity for implantation/sensitization for the decidual cell reaction Enhances Wnt signaling and inhibits TGF-beta signaling. Directly antagonizes activity of BMP2, BMP4, BMP6 and BMP7 in a dose-dependent manner. This chain is Sclerostin domain-containing protein 1 (SOSTDC1), found in Homo sapiens (Human).